A 65-amino-acid polypeptide reads, in one-letter code: MAKRCEICGKGPVAGKNVSHSNRHTRRMFRPNLQKIRVITEDGTVRTMRVCTRCLKAGKVQKATA.

This sequence belongs to the bacterial ribosomal protein bL28 family.

This chain is Large ribosomal subunit protein bL28, found in Pseudothermotoga lettingae (strain ATCC BAA-301 / DSM 14385 / NBRC 107922 / TMO) (Thermotoga lettingae).